Reading from the N-terminus, the 294-residue chain is uncharacterized protein (294 aa).

The N-terminal stretch at 1-18 (MKKLLLIITVFFTCSAVA) is a signal peptide.

This is an uncharacterized protein from Rickettsia bellii (strain RML369-C).